The chain runs to 371 residues: MKLNTLQLENYRNYEQVTLDCHPEVNILIGENAQGKTNLLESIYTLALAKSHRTSNDKELIRFKSDYAKIEGELSYRHGTMPLTMFITKKGKQVKVNHLEQSRLTQYIGHLNVVLFAPEDLNIVKGSPQIRRRFIDMELGQISAVYLNDLAQYQRILKQKNNYLKQLQIGQKTDTTMLEVLNQQFVEYALKVTLRREHFIKELETLAQPIHAGITNDQETLTLDYVPSLKLSNYEANQSELIEEVLALLNDNLQREKERGVCLYGPHRDDLSFNVNGMDAQTYGSQGQQRTTALSIKLAEIELMNIEVGEYPILLLDDVLSELDDSRQTHLLSTIQHKVQTFVTTTSVEGIDHEIMNNAKLYRISQGEILK.

Position 30 to 37 (30 to 37 (GENAQGKT)) interacts with ATP.

It belongs to the RecF family.

It is found in the cytoplasm. The RecF protein is involved in DNA metabolism; it is required for DNA replication and normal SOS inducibility. RecF binds preferentially to single-stranded, linear DNA. It also seems to bind ATP. The protein is DNA replication and repair protein RecF of Staphylococcus epidermidis (strain ATCC 12228 / FDA PCI 1200).